Consider the following 676-residue polypeptide: E3 ubiquitin-protein ligase ICP0 (676 aa).

The RING-type zinc-finger motif lies at 13-52 (CCICLDAITGAARALPCLHAFCLACIRRWLEGRPTCPLCK). Disordered regions lie at residues 101-135 (DLTA…EAAG), 266-486 (HLIP…PAPI), and 555-676 (AAIS…AWRQ). Gly residues predominate over residues 110–135 (PGAGGEAGAAGGSEAGGGAGGAEAAG). Residues 286–303 (SDSDSEGSEDDSWSESEE) are compositionally biased toward acidic residues. Over residues 304-314 (SSSGLSTSDLT) the composition is skewed to low complexity. Positions 315–328 (AIDDTETEPETDAE) are enriched in acidic residues. The segment covering 351 to 361 (YVSTRGRQTPA) has biased composition (polar residues). Composition is skewed to low complexity over residues 375–388 (GRAA…SSRS) and 397–411 (LPAA…QARA). Gly residues predominate over residues 422-439 (GAGLGVAAGETAGWGVGS). Residues 440–450 (EEGRGERRAKL) are compositionally biased toward basic and acidic residues. Pro residues predominate over residues 474-484 (TPAPAPAPAPA). Positions 555–597 (AAISTRAPTPSPAGRAPAADPRRAGAPALAGAARAEAGRNGNP) are enriched in low complexity.

Auto-ubiquitinated. Post-translationally, the strongly acidic region might serve as a transcriptional activation domain, possibly regulated through phosphorylation by casein kinase II.

The enzyme catalyses S-ubiquitinyl-[E2 ubiquitin-conjugating enzyme]-L-cysteine + [acceptor protein]-L-lysine = [E2 ubiquitin-conjugating enzyme]-L-cysteine + N(6)-ubiquitinyl-[acceptor protein]-L-lysine.. Functionally, evades nuclear antiviral defenses triggered by dsDNA viruses. Acts during the initial stages of lytic infection and the reactivation of latent viral genome. Prevents the antiviral effect of nuclear bodies by degrading host PML and SP100. In Bos taurus (Bovine), this protein is E3 ubiquitin-protein ligase ICP0 (BICP0).